The sequence spans 437 residues: Probable D-serine dehydratase (437 aa).

Residue Lys-106 is modified to N6-(pyridoxal phosphate)lysine.

The protein belongs to the serine/threonine dehydratase family. DsdA subfamily. Requires pyridoxal 5'-phosphate as cofactor.

The enzyme catalyses D-serine = pyruvate + NH4(+). The sequence is that of Probable D-serine dehydratase from Hahella chejuensis (strain KCTC 2396).